Consider the following 262-residue polypeptide: Small ribosomal subunit protein eS1z (262 aa).

The span at 1–18 (MAVGKNKRISKGRKGGKK) shows a compositional bias: basic residues. The segment at 1 to 21 (MAVGKNKRISKGRKGGKKKAV) is disordered.

This sequence belongs to the eukaryotic ribosomal protein eS1 family. As to quaternary structure, component of the small ribosomal subunit. Mature ribosomes consist of a small (40S) and a large (60S) subunit. The 40S subunit contains about 33 different proteins and 1 molecule of RNA (18S). The 60S subunit contains about 49 different proteins and 3 molecules of RNA (25S, 5.8S and 5S).

It is found in the cytoplasm. The polypeptide is Small ribosomal subunit protein eS1z (Arabidopsis thaliana (Mouse-ear cress)).